A 249-amino-acid polypeptide reads, in one-letter code: Chromosome-partitioning ATPase Soj (249 aa).

Lys15, Gly16, Gly17, Val18, Gly19, Lys20, Thr21, Thr22, Pro207, and Asn209 together coordinate ATP. An ADP-binding site is contributed by Gly17. ADP is bound by residues Gly19, Lys20, Thr21, Thr22, Pro207, and Asn209. Thr21 contacts Mg(2+).

This sequence belongs to the ParA family. In terms of assembly, monomer in the absence of nucleotides or presence of ADP, in the presence of ATP is found in a monomer-dimer equilibrium. ATP-binding is required for DNA-binding. Probably interacts with Spo0J.

It catalyses the reaction ATP + H2O = ADP + phosphate + H(+). Its activity is regulated as follows. ATPase activity is stimulated 10-fold in the presence of Spo0J and parS DNA (a plasmid centromere-like site or plasmid DNA itself). The first 20 residues of Spo0J stimulate its ATPase activity by 8%. Its function is as follows. ATPase probably involved in chromosome partitioning. Cooperatively binds dsDNA, forming nucleoprotein filaments in a strictly ATP-dependent fashion. Can also bind ssDNA with lower affinity. The protein is Chromosome-partitioning ATPase Soj of Thermus thermophilus (strain ATCC BAA-163 / DSM 7039 / HB27).